The following is a 20-amino-acid chain: Insulin-like growth factor-binding protein 2 (20 aa).

Residues 2–20 (LVFYCPKCTAERQTACPKL) form the IGFBP N-terminal domain.

In terms of assembly, binds IGF2 more than IGF1. In terms of processing, N-glycosylated.

The protein localises to the secreted. Functionally, inhibits IGF-mediated growth and developmental rates. IGF-binding proteins prolong the half-life of the IGFs and have been shown to either inhibit or stimulate the growth promoting effects of the IGFs on cell culture. They alter the interaction of IGFs with their cell surface receptors. The sequence is that of Insulin-like growth factor-binding protein 2 (igfbp2) from Oncorhynchus tshawytscha (Chinook salmon).